The chain runs to 101 residues: Ubiquitin-related modifier 1 (101 aa).

1-thioglycine is present on G101. G101 participates in a covalent cross-link: Glycyl lysine isopeptide (Gly-Lys) (interchain with K-? in acceptor proteins).

The protein belongs to the URM1 family. Post-translationally, C-terminal thiocarboxylation occurs in 2 steps, it is first acyl-adenylated (-COAMP) via the hesA/moeB/thiF part of UBA4, then thiocarboxylated (-COSH) via the rhodanese domain of UBA4.

The protein resides in the cytoplasm. The protein operates within tRNA modification; 5-methoxycarbonylmethyl-2-thiouridine-tRNA biosynthesis. Acts as a sulfur carrier required for 2-thiolation of mcm(5)S(2)U at tRNA wobble positions of cytosolic tRNA(Lys), tRNA(Glu) and tRNA(Gln). Serves as sulfur donor in tRNA 2-thiolation reaction by being thiocarboxylated (-COSH) at its C-terminus by the MOCS3 homolog UBA4. The sulfur is then transferred to tRNA to form 2-thiolation of mcm(5)S(2)U. Prior mcm(5) tRNA modification by the elongator complex is required for 2-thiolation. Also acts as a ubiquitin-like protein (UBL) that is covalently conjugated via an isopeptide bond to lysine residues of target proteins such as AHP1. The thiocarboxylated form serves as substrate for conjugation and oxidative stress specifically induces the formation of UBL-protein conjugates. The protein is Ubiquitin-related modifier 1 of Debaryomyces hansenii (strain ATCC 36239 / CBS 767 / BCRC 21394 / JCM 1990 / NBRC 0083 / IGC 2968) (Yeast).